The primary structure comprises 181 residues: LEM domain-containing protein 1 (181 aa).

One can recognise an LEM domain in the interval 1-45 (MVDVKCLSDCKLQNQLEKLGFSPGPILPSTRKLYEKKLVQLLVSP). Residues 152 to 172 (FPVGLKLAVLGIFIIVVFVYL) form a helical; Signal-anchor for type II membrane protein membrane-spanning segment.

As to expression, testis-specific. Isoform 6 is detected in 17 of 18 colon cancer tissues examined.

The protein resides in the membrane. The sequence is that of LEM domain-containing protein 1 (LEMD1) from Homo sapiens (Human).